We begin with the raw amino-acid sequence, 250 residues long: tRNA (guanine-N(1)-)-methyltransferase (250 aa).

Residues glycine 115 and 135 to 140 (LGDFVL) each bind S-adenosyl-L-methionine.

Belongs to the RNA methyltransferase TrmD family. In terms of assembly, homodimer.

Its subcellular location is the cytoplasm. The catalysed reaction is guanosine(37) in tRNA + S-adenosyl-L-methionine = N(1)-methylguanosine(37) in tRNA + S-adenosyl-L-homocysteine + H(+). Its function is as follows. Specifically methylates guanosine-37 in various tRNAs. The sequence is that of tRNA (guanine-N(1)-)-methyltransferase from Legionella pneumophila (strain Lens).